The chain runs to 388 residues: Succinate--CoA ligase [ADP-forming] subunit beta (388 aa).

The ATP-grasp domain occupies 9–243; the sequence is KQLFHRYGIP…ESQLAPLEVR (235 aa). ATP contacts are provided by residues Lys-45, 52–54, Glu-98, Val-101, and Glu-106; that span reads GRG. Mg(2+) is bound by residues Asn-198 and Asp-212. Substrate is bound by residues Asn-263 and 320–322; that span reads GIM.

The protein belongs to the succinate/malate CoA ligase beta subunit family. As to quaternary structure, heterotetramer of two alpha and two beta subunits. The cofactor is Mg(2+).

It catalyses the reaction succinate + ATP + CoA = succinyl-CoA + ADP + phosphate. The enzyme catalyses GTP + succinate + CoA = succinyl-CoA + GDP + phosphate. It functions in the pathway carbohydrate metabolism; tricarboxylic acid cycle; succinate from succinyl-CoA (ligase route): step 1/1. Functionally, succinyl-CoA synthetase functions in the citric acid cycle (TCA), coupling the hydrolysis of succinyl-CoA to the synthesis of either ATP or GTP and thus represents the only step of substrate-level phosphorylation in the TCA. The beta subunit provides nucleotide specificity of the enzyme and binds the substrate succinate, while the binding sites for coenzyme A and phosphate are found in the alpha subunit. In Syntrophotalea carbinolica (strain DSM 2380 / NBRC 103641 / GraBd1) (Pelobacter carbinolicus), this protein is Succinate--CoA ligase [ADP-forming] subunit beta.